A 165-amino-acid polypeptide reads, in one-letter code: Short form salivary protein D7R4 (165 aa).

The signal sequence occupies residues Met1 to Gly21. 3 disulfides stabilise this stretch: Cys27-Cys59, Cys40-Cys165, and Cys98-Cys117. The noradrenaline site is built by Glu28 and Arg43. A serotonin-binding site is contributed by Glu28. Positions 56, 115, 132, and 135 each coordinate serotonin. Residues Tyr115, Asp132, and Glu135 each coordinate histamine. The tryptamine site is built by Tyr115, Asp132, and Glu135. Residues Asp132 and Glu135 each coordinate noradrenaline.

It belongs to the PBP/GOBP family. As to expression, female saliva (at protein level). Female salivary gland. Not detected in female carcass without salivary glands. Not detected in male tissues.

The protein localises to the secreted. In terms of biological role, modulates blood feeding of female mosquitoes on vertebrate species by binding and sequestering different mediators involved in the host response. Binds serotonin, noradrenaline, histamine and tryptamine. Inhibits histamine-, serotonin- and partially noradrenaline-induced smooth muscle contraction. Exhibits vasodilating activity. This Anopheles gambiae (African malaria mosquito) protein is Short form salivary protein D7R4.